A 379-amino-acid polypeptide reads, in one-letter code: Cobalt-precorrin-5B C(1)-methyltransferase (379 aa).

It belongs to the CbiD family.

The catalysed reaction is Co-precorrin-5B + S-adenosyl-L-methionine = Co-precorrin-6A + S-adenosyl-L-homocysteine. It participates in cofactor biosynthesis; adenosylcobalamin biosynthesis; cob(II)yrinate a,c-diamide from sirohydrochlorin (anaerobic route): step 6/10. Its function is as follows. Catalyzes the methylation of C-1 in cobalt-precorrin-5B to form cobalt-precorrin-6A. The protein is Cobalt-precorrin-5B C(1)-methyltransferase of Salmonella paratyphi A (strain ATCC 9150 / SARB42).